The primary structure comprises 215 residues: Cytochrome b6 (215 aa).

A helical membrane pass occupies residues 32 to 52; it reads IFYCLGGITLTCFLVQIATGF. C35 contacts heme c. Residues H86 and H100 each coordinate heme b. 3 helical membrane passes run 90 to 110, 116 to 136, and 186 to 206; these read ASMM…TGGF, LTWV…VTGY, and LHTF…FLMI. Positions 187 and 202 each coordinate heme b.

Belongs to the cytochrome b family. PetB subfamily. The 4 large subunits of the cytochrome b6-f complex are cytochrome b6, subunit IV (17 kDa polypeptide, PetD), cytochrome f and the Rieske protein, while the 4 small subunits are PetG, PetL, PetM and PetN. The complex functions as a dimer. It depends on heme b as a cofactor. The cofactor is heme c.

The protein resides in the plastid. It is found in the chloroplast thylakoid membrane. In terms of biological role, component of the cytochrome b6-f complex, which mediates electron transfer between photosystem II (PSII) and photosystem I (PSI), cyclic electron flow around PSI, and state transitions. The chain is Cytochrome b6 from Adiantum capillus-veneris (Maidenhair fern).